Here is a 286-residue protein sequence, read N- to C-terminus: Soluble epoxide hydrolase (286 aa).

Residues 26 to 123 enclose the AB hydrolase-1 domain; the sequence is YPLVLLHGWP…DLVERLFILD (98 aa). Asp-99 acts as the Nucleophile in catalysis. Catalysis depends on Tyr-209, which acts as the Proton donor. His-264 (proton acceptor) is an active-site residue.

The protein belongs to the AB hydrolase superfamily. Epoxide hydrolase family. In terms of assembly, homotetramer.

The protein resides in the cytoplasm. It is found in the cell membrane. The catalysed reaction is an epoxide + H2O = an ethanediol. Functionally, involved in catabolic degradation of epoxides. Shows highest activity towards C6 and C7 carbocyclic epoxides. Also active towards linear 1,2-epoxyalkanes. The chain is Soluble epoxide hydrolase from Corynebacterium sp. (strain C12).